Here is a 119-residue protein sequence, read N- to C-terminus: Large ribosomal subunit protein bL20c (119 aa).

This sequence belongs to the bacterial ribosomal protein bL20 family.

It localises to the plastid. The protein localises to the chloroplast. In terms of biological role, binds directly to 23S ribosomal RNA and is necessary for the in vitro assembly process of the 50S ribosomal subunit. It is not involved in the protein synthesizing functions of that subunit. This Zea mays (Maize) protein is Large ribosomal subunit protein bL20c (rpl20).